The sequence spans 330 residues: Protein C10 (330 aa).

Belongs to the poxviridae C4/C10 protein family.

This is Protein C10 from Homo sapiens (Human).